The sequence spans 239 residues: Ribonuclease 3 (239 aa).

One can recognise an RNase III domain in the interval 11-133 (HAAIQKKLGY…MFAAVSFDAD (123 aa)). Position 46 (Glu46) interacts with Mg(2+). The active site involves Asp50. 2 residues coordinate Mg(2+): Asp119 and Glu122. The region spanning 160 to 230 (DGKTALQEAL…AKEALKWLEE (71 aa)) is the DRBM domain.

The protein belongs to the ribonuclease III family. As to quaternary structure, homodimer. Mg(2+) serves as cofactor.

It is found in the cytoplasm. The enzyme catalyses Endonucleolytic cleavage to 5'-phosphomonoester.. Digests double-stranded RNA. Involved in the processing of primary rRNA transcript to yield the immediate precursors to the large and small rRNAs (23S and 16S). Also processes some mRNAs, and tRNAs when they are encoded in the rRNA operon. Its function is as follows. CRISPR (clustered regularly interspaced short palindromic repeat) is an adaptive immune system that provides protection against mobile genetic elements (viruses, transposable elements and conjugative plasmids). CRISPR clusters contain spacers, sequences complementary to antecedent mobile elements, and target invading nucleic acids. CRISPR clusters are transcribed and processed into CRISPR RNA (crRNA). In this organism endogenous ribonuclease 3 and Cas9 are required for correct coprocessing of pre-crRNA and the trans-encoded small RNA (tracrRNA). Cas9, crRNA and tracRNA are required for cleavage of invading DNA. Involved in 3'-end processing but not 5'-end processing of crRNA and tracrRNA. The sequence is that of Ribonuclease 3 from Neisseria meningitidis serogroup C (strain 8013).